A 70-amino-acid polypeptide reads, in one-letter code: Turripeptide Ici9.2 (70 aa).

The N-terminal stretch at 1–20 (MKVYCLLLVLLVGLVSQAQG) is a signal peptide. The Kazal-like domain maps to 21–70 (QLDKKCQTMCTMEYLPVCGSDGTTYPNKCTLTSTACVNQMDITVLHNGEC). Disulfide bonds link C26–C56, C30–C49, and C38–C70.

The protein belongs to the conopeptide P-like superfamily. Expressed by the venom duct.

The protein resides in the secreted. Its function is as follows. Acts as a neurotoxin by inhibiting an ion channel. May also act as a serine protease inhibitor, since it possess the kazal serine protease inhibitor signature. The chain is Turripeptide Ici9.2 from Iotyrris cingulifera (Sea snail).